Here is a 272-residue protein sequence, read N- to C-terminus: Formamidopyrimidine-DNA glycosylase (272 aa).

Catalysis depends on proline 2, which acts as the Schiff-base intermediate with DNA. Glutamate 3 acts as the Proton donor in catalysis. Residue lysine 58 is the Proton donor; for beta-elimination activity of the active site. The DNA site is built by histidine 91, arginine 111, and arginine 153. The segment at 238–272 adopts an FPG-type zinc-finger fold; that stretch reads AVYGRANKACVICSKPLKEIRQAQRSTVFCINCQS. The Proton donor; for delta-elimination activity role is filled by arginine 262.

This sequence belongs to the FPG family. Monomer. Zn(2+) serves as cofactor.

It catalyses the reaction Hydrolysis of DNA containing ring-opened 7-methylguanine residues, releasing 2,6-diamino-4-hydroxy-5-(N-methyl)formamidopyrimidine.. The enzyme catalyses 2'-deoxyribonucleotide-(2'-deoxyribose 5'-phosphate)-2'-deoxyribonucleotide-DNA = a 3'-end 2'-deoxyribonucleotide-(2,3-dehydro-2,3-deoxyribose 5'-phosphate)-DNA + a 5'-end 5'-phospho-2'-deoxyribonucleoside-DNA + H(+). In terms of biological role, involved in base excision repair of DNA damaged by oxidation or by mutagenic agents. Acts as a DNA glycosylase that recognizes and removes damaged bases. Has a preference for oxidized purines, such as 7,8-dihydro-8-oxoguanine (8-oxoG). Has AP (apurinic/apyrimidinic) lyase activity and introduces nicks in the DNA strand. Cleaves the DNA backbone by beta-delta elimination to generate a single-strand break at the site of the removed base with both 3'- and 5'-phosphates. The protein is Formamidopyrimidine-DNA glycosylase of Marinomonas sp. (strain MWYL1).